The sequence spans 102 residues: Urease subunit beta (102 aa).

The protein belongs to the urease beta subunit family. As to quaternary structure, heterotrimer of UreA (gamma), UreB (beta) and UreC (alpha) subunits. Three heterotrimers associate to form the active enzyme.

It localises to the cytoplasm. It catalyses the reaction urea + 2 H2O + H(+) = hydrogencarbonate + 2 NH4(+). It functions in the pathway nitrogen metabolism; urea degradation; CO(2) and NH(3) from urea (urease route): step 1/1. The chain is Urease subunit beta from Methylibium petroleiphilum (strain ATCC BAA-1232 / LMG 22953 / PM1).